A 492-amino-acid polypeptide reads, in one-letter code: Katanin p60 ATPase-containing subunit A1 (492 aa).

Positions 91–158 (PAHDGEVWSL…MKPVRAREKK (68 aa)) are disordered. The span at 138–147 (LPSSKNTNNV) shows a compositional bias: polar residues. An ATP-binding site is contributed by 250 to 257 (GPPGTGKT).

The protein belongs to the AAA ATPase family. Katanin p60 subunit A1 subfamily. In terms of assembly, can homooligomerize into hexameric rings, which may be promoted by interaction with microtubules. Interacts with katnb1, which may serve as a targeting subunit.

Its subcellular location is the cytoplasm. The protein localises to the cytoskeleton. The protein resides in the microtubule organizing center. It is found in the centrosome. It localises to the spindle pole. Its subcellular location is the spindle. The catalysed reaction is n ATP + n H2O + a microtubule = n ADP + n phosphate + (n+1) alpha/beta tubulin heterodimers.. With respect to regulation, ATPase activity is stimulated by microtubules, which promote homooligomerization. ATP-dependent microtubule severing is stimulated by interaction with katnb1. Functionally, catalytic subunit of a complex which severs microtubules in an ATP-dependent manner. Microtubule severing may promote rapid reorganization of cellular microtubule arrays and the release of microtubules from the centrosome following nucleation. The chain is Katanin p60 ATPase-containing subunit A1 (katna1) from Xenopus tropicalis (Western clawed frog).